A 298-amino-acid polypeptide reads, in one-letter code: DegV domain-containing protein UU535 (298 aa).

One can recognise a DegV domain in the interval 5–287 (FLIMTDSSTT…KGALGIQVIA (283 aa)). Hexadecanoate contacts are provided by Ser-65 and Ser-96.

Its function is as follows. May bind long-chain fatty acids, such as palmitate, and may play a role in lipid transport or fatty acid metabolism. The protein is DegV domain-containing protein UU535 of Ureaplasma parvum serovar 3 (strain ATCC 700970).